The following is a 120-amino-acid chain: Large ribosomal subunit protein bL12 (120 aa).

This sequence belongs to the bacterial ribosomal protein bL12 family. In terms of assembly, homodimer. Part of the ribosomal stalk of the 50S ribosomal subunit. Forms a multimeric L10(L12)X complex, where L10 forms an elongated spine to which 2 to 4 L12 dimers bind in a sequential fashion. Binds GTP-bound translation factors.

Functionally, forms part of the ribosomal stalk which helps the ribosome interact with GTP-bound translation factors. Is thus essential for accurate translation. The polypeptide is Large ribosomal subunit protein bL12 (Lachnoclostridium phytofermentans (strain ATCC 700394 / DSM 18823 / ISDg) (Clostridium phytofermentans)).